Here is a 164-residue protein sequence, read N- to C-terminus: uncharacterized protein (164 aa).

This is an uncharacterized protein from Caenorhabditis elegans.